The sequence spans 894 residues: Protein SEY1 (894 aa).

A disordered region spans residues Met1–Thr64. Topologically, residues Met1 to Gln768 are cytoplasmic. A compositionally biased stretch (low complexity) spans Pro9–Pro24. Positions Ala40–Thr53 are enriched in polar residues. Residues Gly137–Tyr359 enclose the GB1/RHD3-type G domain. GTP is bound at residue Gly147–Ser154. Residues Lys536–Glu559 are a coiled coil. The chain crosses the membrane as a helical span at residues Val769–Leu789. Residues Arg790–Pro792 lie on the Lumenal side of the membrane. Residues Val793–Leu813 form a helical membrane-spanning segment. The Cytoplasmic portion of the chain corresponds to Gly814–Phe894. Positions Asp841–Phe894 are disordered.

It belongs to the TRAFAC class dynamin-like GTPase superfamily. GB1/RHD3 GTPase family. RHD3 subfamily.

It is found in the endoplasmic reticulum membrane. Functionally, cooperates with the reticulon proteins and tubule-shaping DP1 family proteins to generate and maintain the structure of the tubular endoplasmic reticulum network. Has GTPase activity, which is required for its function in ER organization. This is Protein SEY1 from Malassezia globosa (strain ATCC MYA-4612 / CBS 7966) (Dandruff-associated fungus).